The primary structure comprises 436 residues: Adenosylmethionine-8-amino-7-oxononanoate aminotransferase (436 aa).

Tryptophan 56 is a binding site for substrate. 114–115 serves as a coordination point for pyridoxal 5'-phosphate; the sequence is GS. Substrate is bound at residue tyrosine 148. Aspartate 245 is a pyridoxal 5'-phosphate binding site. The substrate site is built by lysine 274, serine 309, and arginine 400. Lysine 274 bears the N6-(pyridoxal phosphate)lysine mark.

The protein belongs to the class-III pyridoxal-phosphate-dependent aminotransferase family. BioA subfamily. As to quaternary structure, homodimer. Pyridoxal 5'-phosphate is required as a cofactor.

Its subcellular location is the cytoplasm. The enzyme catalyses (8S)-8-amino-7-oxononanoate + S-adenosyl-L-methionine = S-adenosyl-4-methylsulfanyl-2-oxobutanoate + (7R,8S)-7,8-diammoniononanoate. The protein operates within cofactor biosynthesis; biotin biosynthesis; 7,8-diaminononanoate from 8-amino-7-oxononanoate (SAM route): step 1/1. Catalyzes the transfer of the alpha-amino group from S-adenosyl-L-methionine (SAM) to 7-keto-8-aminopelargonic acid (KAPA) to form 7,8-diaminopelargonic acid (DAPA). It is the only aminotransferase known to utilize SAM as an amino donor. This chain is Adenosylmethionine-8-amino-7-oxononanoate aminotransferase, found in Helicobacter pylori (strain ATCC 700392 / 26695) (Campylobacter pylori).